We begin with the raw amino-acid sequence, 353 residues long: 41 kDa protein (353 aa).

The interval 132-197 (QSSHASALEQ…DNNSSDTIKD (66 aa)) is disordered. Over residues 157-169 (LDNKGKSDSENCN) the composition is skewed to basic and acidic residues.

In Lactobacillus helveticus (Lactobacillus suntoryeus), this protein is 41 kDa protein.